The sequence spans 706 residues: Elongation factor G (706 aa).

Residues 12–288 (EKTRNIGIMA…GVTNYLPSPN (277 aa)) form the tr-type G domain. GTP is bound by residues 21 to 28 (AHIDAGKT), 85 to 89 (DTPGH), and 139 to 142 (NKMD). The tract at residues 288-309 (NDVPAITGHHPQDKEEDITRHP) is disordered. Residues 297–309 (HPQDKEEDITRHP) show a composition bias toward basic and acidic residues.

It belongs to the TRAFAC class translation factor GTPase superfamily. Classic translation factor GTPase family. EF-G/EF-2 subfamily.

Its subcellular location is the cytoplasm. Catalyzes the GTP-dependent ribosomal translocation step during translation elongation. During this step, the ribosome changes from the pre-translocational (PRE) to the post-translocational (POST) state as the newly formed A-site-bound peptidyl-tRNA and P-site-bound deacylated tRNA move to the P and E sites, respectively. Catalyzes the coordinated movement of the two tRNA molecules, the mRNA and conformational changes in the ribosome. The sequence is that of Elongation factor G from Salinibacter ruber (strain DSM 13855 / M31).